An 84-amino-acid polypeptide reads, in one-letter code: Dolichol phosphate-mannose biosynthesis regulatory protein (84 aa).

The next 2 helical transmembrane spans lie at 11-31 (FGLVAVSLIIFTYYTTWVILL) and 49-69 (YAVLIPLATGLLLLLFVGLFI).

This sequence belongs to the DPM2 family. Component of the dolichol-phosphate mannose (DPM) synthase complex composed of DPM1, DPM2 and DPM3; in the complex interacts directly with DPM3. Component of the glycosylphosphatidylinositol-N-acetylglucosaminyltransferase (GPI-GnT) complex composed at least by PIGA, PIGC, PIGH, PIGP, PIGQ, PIGY and DPM2. Interacts with PIGA, PIGC and PIGQ.

Its subcellular location is the endoplasmic reticulum membrane. Its pathway is protein modification; protein glycosylation. Its function is as follows. Regulates the biosynthesis of dolichol phosphate-mannose. Regulatory subunit of the dolichol-phosphate mannose (DPM) synthase complex; essential for the ER localization and stable expression of DPM1. Part of the glycosylphosphatidylinositol-N-acetylglucosaminyltransferase (GPI-GnT) complex that catalyzes the transfer of N-acetylglucosamine from UDP-N-acetylglucosamine to phosphatidylinositol and participates in the first step of GPI biosynthesis. May act by regulating the GPI-GNT complex. This is Dolichol phosphate-mannose biosynthesis regulatory protein from Cricetulus griseus (Chinese hamster).